Here is a 107-residue protein sequence, read N- to C-terminus: Nucleoid-associated protein mlr5504 (107 aa).

It belongs to the YbaB/EbfC family. In terms of assembly, homodimer.

It is found in the cytoplasm. Its subcellular location is the nucleoid. Functionally, binds to DNA and alters its conformation. May be involved in regulation of gene expression, nucleoid organization and DNA protection. This is Nucleoid-associated protein mlr5504 from Mesorhizobium japonicum (strain LMG 29417 / CECT 9101 / MAFF 303099) (Mesorhizobium loti (strain MAFF 303099)).